The sequence spans 63 residues: MGCISSKSTQTGKKEGKTAAERKAAWEGIRHGLPRRKTAEDKARRIELFKKFDKNNTGKLSME.

Positions 1 to 11 are enriched in polar residues; the sequence is MGCISSKSTQT. Residues 1–23 form a disordered region; it reads MGCISSKSTQTGKKEGKTAAERK. Positions 12 to 23 are enriched in basic and acidic residues; it reads GKKEGKTAAERK. An EF-hand domain is found at 40 to 63; the sequence is EDKARRIELFKKFDKNNTGKLSME. 4 residues coordinate Ca(2+): aspartate 53, asparagine 55, threonine 57, and lysine 59.

Belongs to the calflagin family.

Its subcellular location is the cell projection. The protein localises to the cilium. The protein resides in the flagellum. In Crithidia fasciculata, this protein is Putative flagellar calcium-binding protein (CABP).